The chain runs to 270 residues: Type III pantothenate kinase (270 aa).

16–23 (EIGNTTAM) is an ATP binding site. Residues tyrosine 106 and 113-116 (GADR) each bind substrate. Residue aspartate 115 is the Proton acceptor of the active site. Residue aspartate 136 participates in K(+) binding. Threonine 139 provides a ligand contact to ATP. Threonine 191 is a binding site for substrate.

It belongs to the type III pantothenate kinase family. Homodimer. It depends on NH4(+) as a cofactor. K(+) serves as cofactor.

The protein resides in the cytoplasm. The catalysed reaction is (R)-pantothenate + ATP = (R)-4'-phosphopantothenate + ADP + H(+). It functions in the pathway cofactor biosynthesis; coenzyme A biosynthesis; CoA from (R)-pantothenate: step 1/5. Its function is as follows. Catalyzes the phosphorylation of pantothenate (Pan), the first step in CoA biosynthesis. This Chlorobium luteolum (strain DSM 273 / BCRC 81028 / 2530) (Pelodictyon luteolum) protein is Type III pantothenate kinase.